We begin with the raw amino-acid sequence, 455 residues long: Argininosuccinate lyase (455 aa).

Belongs to the lyase 1 family. Argininosuccinate lyase subfamily.

Its subcellular location is the cytoplasm. The enzyme catalyses 2-(N(omega)-L-arginino)succinate = fumarate + L-arginine. It functions in the pathway amino-acid biosynthesis; L-arginine biosynthesis; L-arginine from L-ornithine and carbamoyl phosphate: step 3/3. The chain is Argininosuccinate lyase from Shewanella oneidensis (strain ATCC 700550 / JCM 31522 / CIP 106686 / LMG 19005 / NCIMB 14063 / MR-1).